The following is a 697-amino-acid chain: Serine/threonine-protein kinase tousled-like 2 (697 aa).

2 disordered regions span residues 27-136 (KAPL…TAPV) and 289-315 (LAKR…NKTN). Positions 31–44 (NSESSNQSLCSLGS) are enriched in polar residues. Residues 46–62 (SDKELEQTPEKKQNDQR) are compositionally biased toward basic and acidic residues. The segment covering 111–131 (SSPQHSLSNPLPLPSQQCSPP) has biased composition (low complexity). Coiled-coil stretches lie at residues 264-293 (AFQN…AKRK) and 334-372 (FKLR…IHNE). Positions 387-666 (YLLLHLLGRG…VQQLACDPYL (280 aa)) constitute a Protein kinase domain. ATP contacts are provided by residues 393–401 (LGRGGFSEV) and K416. D517 (proton acceptor) is an active-site residue.

The protein belongs to the protein kinase superfamily. Ser/Thr protein kinase family. In terms of assembly, monomer. May form homodimers; homodimerization may enhance autophosphoylation and enzymatic activity. Heterodimer with TLK1. It depends on Mg(2+) as a cofactor. Phosphorylated. Autophosphorylated; phosphorylation promotes the assembly of higher order oligomers and enzymatic activity.

Its subcellular location is the nucleus. It localises to the nucleoplasm. The protein resides in the cytoplasm. The protein localises to the perinuclear region. It is found in the cytoskeleton. It catalyses the reaction L-seryl-[protein] + ATP = O-phospho-L-seryl-[protein] + ADP + H(+). The enzyme catalyses L-threonyl-[protein] + ATP = O-phospho-L-threonyl-[protein] + ADP + H(+). Serine/threonine-protein kinase involved in the process of chromatin assembly and probably also DNA replication, transcription, repair, and chromosome segregation. Negative regulator of amino acid starvation-induced autophagy. This is Serine/threonine-protein kinase tousled-like 2 from Xenopus tropicalis (Western clawed frog).